Consider the following 95-residue polypeptide: Co-chaperonin GroES (95 aa).

This sequence belongs to the GroES chaperonin family. Heptamer of 7 subunits arranged in a ring. Interacts with the chaperonin GroEL.

Its subcellular location is the cytoplasm. Its function is as follows. Together with the chaperonin GroEL, plays an essential role in assisting protein folding. The GroEL-GroES system forms a nano-cage that allows encapsulation of the non-native substrate proteins and provides a physical environment optimized to promote and accelerate protein folding. GroES binds to the apical surface of the GroEL ring, thereby capping the opening of the GroEL channel. This is Co-chaperonin GroES from Chlorobium luteolum (strain DSM 273 / BCRC 81028 / 2530) (Pelodictyon luteolum).